Here is a 363-residue protein sequence, read N- to C-terminus: Probable auxin efflux carrier component 5a (363 aa).

10 helical membrane-spanning segments follow: residues Val-7 to Ser-27, Cys-39 to Thr-59, Val-72 to Phe-92, Ser-103 to Ala-123, Leu-134 to Leu-154, Phe-222 to Phe-242, Val-246 to Ala-266, Leu-281 to Val-301, Val-307 to Ala-327, and Ile-342 to Ile-362.

This sequence belongs to the auxin efflux carrier (TC 2.A.69.1) family. In terms of tissue distribution, expressed in leaves, shoot apex and panicles. Expressed in roots, stem bases, stems, leaves and young panicles.

It localises to the membrane. May act as a component of the auxin efflux carrier. This Oryza sativa subsp. japonica (Rice) protein is Probable auxin efflux carrier component 5a.